Consider the following 256-residue polypeptide: Trans-aconitate 2-methyltransferase (256 aa).

This sequence belongs to the methyltransferase superfamily. Tam family.

It is found in the cytoplasm. The enzyme catalyses trans-aconitate + S-adenosyl-L-methionine = (E)-3-(methoxycarbonyl)pent-2-enedioate + S-adenosyl-L-homocysteine. Catalyzes the S-adenosylmethionine monomethyl esterification of trans-aconitate. The polypeptide is Trans-aconitate 2-methyltransferase (Afipia carboxidovorans (strain ATCC 49405 / DSM 1227 / KCTC 32145 / OM5) (Oligotropha carboxidovorans)).